The chain runs to 436 residues: Cyclin-A2-2 (436 aa).

Belongs to the cyclin family. Cyclin AB subfamily. Expressed in roots, stems, leaves, flowers and siliques.

This is Cyclin-A2-2 (CYCA2-2) from Arabidopsis thaliana (Mouse-ear cress).